Consider the following 217-residue polypeptide: FMN-dependent NADH:quinone oxidoreductase (217 aa).

Residues Ser10, Ser17–Ser19, and Ser137–Gly140 each bind FMN.

The protein belongs to the azoreductase type 1 family. In terms of assembly, homodimer. The cofactor is FMN.

The enzyme catalyses 2 a quinone + NADH + H(+) = 2 a 1,4-benzosemiquinone + NAD(+). It carries out the reaction N,N-dimethyl-1,4-phenylenediamine + anthranilate + 2 NAD(+) = 2-(4-dimethylaminophenyl)diazenylbenzoate + 2 NADH + 2 H(+). Functionally, quinone reductase that provides resistance to thiol-specific stress caused by electrophilic quinones. Its function is as follows. Also exhibits azoreductase activity. Catalyzes the reductive cleavage of the azo bond in aromatic azo compounds to the corresponding amines. The polypeptide is FMN-dependent NADH:quinone oxidoreductase (Streptomyces avermitilis (strain ATCC 31267 / DSM 46492 / JCM 5070 / NBRC 14893 / NCIMB 12804 / NRRL 8165 / MA-4680)).